Consider the following 117-residue polypeptide: Large ribosomal subunit protein bL20 (117 aa).

The protein belongs to the bacterial ribosomal protein bL20 family.

In terms of biological role, binds directly to 23S ribosomal RNA and is necessary for the in vitro assembly process of the 50S ribosomal subunit. It is not involved in the protein synthesizing functions of that subunit. This chain is Large ribosomal subunit protein bL20, found in Pelobacter propionicus (strain DSM 2379 / NBRC 103807 / OttBd1).